Here is a 234-residue protein sequence, read N- to C-terminus: Triggering receptor expressed on myeloid cells 1 (234 aa).

An N-terminal signal peptide occupies residues M1–A20. At A21–N205 the chain is on the extracellular side. An Ig-like V-type domain is found at E26–T134. Cysteines 41 and 113 form a disulfide. Residues N146, N191, and N194 are each glycosylated (N-linked (GlcNAc...) asparagine). Residues I206–A226 traverse the membrane as a helical segment. Residues V227–P234 are Cytoplasmic-facing.

Monomer. Homomultimer; when activated. Interacts with TYROBP/DAP12. Interacts with TLR4. Post-translationally, glycosylated. In terms of tissue distribution, mostly expressed by immune cells of the myeloid lineage, such as monocytes, macrophages, neutrophils and dendritic cells. Expression is associated with a mature stage of myeloid development. Highly expressed in adult liver, lung and spleen than in corresponding fetal tissue. Also expressed in the lymph node, placenta, spinal cord and heart tissues. Isoform 2 was detected in the lung, liver and mature monocytes.

It is found in the cell membrane. Its subcellular location is the secreted. In terms of biological role, cell surface receptor that plays important roles in innate and adaptive immunity by amplifying inflammatory responses. Upon activation by various ligands such as PGLYRP1, HMGB1 or HSP70, multimerizes and forms a complex with transmembrane adapter TYROBP/DAP12. In turn, initiates a SYK-mediated cascade of tyrosine phosphorylation, activating multiple downstream mediators such as BTK, MAPK1, MAPK3 or phospholipase C-gamma. This cascade promotes the neutrophil- and macrophage-mediated release of pro-inflammatory cytokines and/or chemokines, as well as their migration and thereby amplifies inflammatory responses that are triggered by bacterial and fungal infections. By also promoting the amplification of inflammatory signals that are initially triggered by Toll-like receptor (TLR) and NOD-like receptor engagement, plays a major role in the pathophysiology of acute and chronic inflammatory diseases of different etiologies including septic shock and atherosclerosis. Acts as a decoy receptor, counterbalancing TREM1 pro-inflammatory activity through the neutralization of its ligand. The sequence is that of Triggering receptor expressed on myeloid cells 1 (TREM1) from Homo sapiens (Human).